A 101-amino-acid chain; its full sequence is Protein SSXA1 (101 aa).

One can recognise a KRAB-related domain in the interval 19–83; sequence ETCQAFEDIS…ERVTKSVLSD (65 aa). Residues 73-101 are disordered; sequence KERVTKSVLSDSDEVSSHESQDKRKNPVV. Residues 87 to 101 are compositionally biased toward basic and acidic residues; the sequence is VSSHESQDKRKNPVV.

Belongs to the SSX family. Specifically expressed in testis (at protein level). Not detected in other tissues tested (at protein level).

The protein localises to the nucleus. Functionally, could act as a modulator of transcription. The protein is Protein SSXA1 of Mus musculus (Mouse).